Here is a 310-residue protein sequence, read N- to C-terminus: 4-hydroxythreonine-4-phosphate dehydrogenase (310 aa).

Residue Thr129 coordinates substrate. A divalent metal cation is bound by residues His158, His202, and His250. Positions 258, 267, and 276 each coordinate substrate.

It belongs to the PdxA family. Homodimer. A divalent metal cation is required as a cofactor.

The protein resides in the cytoplasm. The catalysed reaction is 4-(phosphooxy)-L-threonine + NAD(+) = 3-amino-2-oxopropyl phosphate + CO2 + NADH. It functions in the pathway cofactor biosynthesis; pyridoxine 5'-phosphate biosynthesis; pyridoxine 5'-phosphate from D-erythrose 4-phosphate: step 4/5. Catalyzes the NAD(P)-dependent oxidation of 4-(phosphooxy)-L-threonine (HTP) into 2-amino-3-oxo-4-(phosphooxy)butyric acid which spontaneously decarboxylates to form 3-amino-2-oxopropyl phosphate (AHAP). The polypeptide is 4-hydroxythreonine-4-phosphate dehydrogenase (Hydrogenobaculum sp. (strain Y04AAS1)).